Consider the following 800-residue polypeptide: Nucleolar RNA helicase 2-B (800 aa).

The span at 1-14 (MPGKVYTDEMEGKS) shows a compositional bias: basic and acidic residues. The segment at 1–200 (MPGKVYTDEM…TDTSEITAAN (200 aa)) is disordered. Polar residues predominate over residues 114-124 (ETNISLSSQGG). The Q motif signature appears at 221-249 (GDFSKFPISKDTIKNLQAKGVTYLFPIQS). Positions 252-431 (FHTVYSGKDV…KKYMRKQYEK (180 aa)) constitute a Helicase ATP-binding domain. 265–272 (ARTGTGKT) is an ATP binding site. The short motif at 374 to 377 (DEVD) is the DEAD box element. Residues 464-620 (DIVQVYSGSH…SSADAIKSLD (157 aa)) form the Helicase C-terminal domain. The tract at residues 750–800 (IQESERSFDGPRNRSFGGRGRRPFDRRNNSRNSSGGGGGRRGRSGGFRRGR) is disordered. The segment covering 752-761 (ESERSFDGPR) has biased composition (basic and acidic residues). Basic residues predominate over residues 789 to 800 (RRGRSGGFRRGR).

The protein belongs to the DEAD box helicase family. DDX21/DDX50 subfamily. Widely expressed. Expressed at higher level in stomach. Expressed at lower level compared to ddx21-a.

Its subcellular location is the nucleus. The protein resides in the nucleolus. It localises to the nucleoplasm. The protein localises to the cytoplasm. It is found in the cytosol. Its subcellular location is the mitochondrion. It carries out the reaction ATP + H2O = ADP + phosphate + H(+). RNA helicase that acts as a sensor of the transcriptional status of both RNA polymerase (Pol) I and II: promotes ribosomal RNA (rRNA) processing and transcription from polymerase II (Pol II). Binds various RNAs, such as rRNAs, snoRNAs, 7SK and, at lower extent, mRNAs. In the nucleolus, localizes to rDNA locus, where it directly binds rRNAs and snoRNAs, and promotes rRNA transcription, processing and modification. Required for rRNA 2'-O-methylation, possibly by promoting the recruitment of late-acting snoRNAs SNORD56 and SNORD58 with pre-ribosomal complexes. In the nucleoplasm, binds 7SK RNA and is recruited to the promoters of Pol II-transcribed genes: acts by facilitating the release of P-TEFb from inhibitory 7SK snRNP in a manner that is dependent on its helicase activity, thereby promoting transcription of its target genes. Required to prevent R-loop-associated DNA damage and transcription-associated genomic instability. In Xenopus laevis (African clawed frog), this protein is Nucleolar RNA helicase 2-B (ddx21-b).